Here is a 203-residue protein sequence, read N- to C-terminus: FMN-dependent NADH:quinone oxidoreductase (203 aa).

Residues S9 and 15 to 17 (SKS) each bind FMN.

The protein belongs to the azoreductase type 1 family. As to quaternary structure, homodimer. It depends on FMN as a cofactor.

It carries out the reaction 2 a quinone + NADH + H(+) = 2 a 1,4-benzosemiquinone + NAD(+). The catalysed reaction is N,N-dimethyl-1,4-phenylenediamine + anthranilate + 2 NAD(+) = 2-(4-dimethylaminophenyl)diazenylbenzoate + 2 NADH + 2 H(+). Its function is as follows. Quinone reductase that provides resistance to thiol-specific stress caused by electrophilic quinones. Functionally, also exhibits azoreductase activity. Catalyzes the reductive cleavage of the azo bond in aromatic azo compounds to the corresponding amines. The protein is FMN-dependent NADH:quinone oxidoreductase of Bordetella avium (strain 197N).